The sequence spans 225 residues: Pre-mRNA-splicing factor SPF27 (225 aa).

Residue A2 is modified to N-acetylalanine. A Phosphoserine modification is found at S94. Residues 138–222 (YNENLVHMIE…HGEANKENIR (85 aa)) are a coiled coil.

It belongs to the SPF27 family. Component of the pre-catalytic and catalytic spliceosome complexes. Component of the postcatalytic spliceosome P complex. Component of the PRP19-CDC5L splicing complex composed of a core complex comprising a homotetramer of PRPF19, CDC5L, PLRG1 and BCAS2, and at least three less stably associated proteins CTNNBL1, CWC15 and HSPA8. Interacts directly in the complex with PRPF19, CDC5L and PLRG1. As to expression, ubiquitously expressed.

It localises to the nucleus. Its subcellular location is the nucleolus. Its function is as follows. Required for pre-mRNA splicing as component of the activated spliceosome. Component of the PRP19-CDC5L complex that forms an integral part of the spliceosome and is required for activating pre-mRNA splicing. May have a scaffolding role in the spliceosome assembly as it contacts all other components of the core complex. The PRP19-CDC5L complex may also play a role in the response to DNA damage (DDR). The protein is Pre-mRNA-splicing factor SPF27 (BCAS2) of Homo sapiens (Human).